A 216-amino-acid chain; its full sequence is Ras-related protein RABA1a (216 aa).

20–27 (GDSGVGKS) serves as a coordination point for GTP. The Effector region signature appears at 42–50 (SKSTIGVEF). Residues 68-72 (DTAGQ), 126-129 (NKCD), and 156-157 (SA) each bind GTP. 2 S-geranylgeranyl cysteine lipidation sites follow: Cys213 and Cys214.

This sequence belongs to the small GTPase superfamily. Rab family.

It localises to the cell membrane. Functionally, involved in auxin-mediated response. May be involved in vesicle trafficking of components involved in polar auxin transport. Binds GTP and GDP and possesses intrinsic GTPase activity. In Arabidopsis thaliana (Mouse-ear cress), this protein is Ras-related protein RABA1a (RABA1A).